A 158-amino-acid polypeptide reads, in one-letter code: Low molecular weight phosphotyrosine protein phosphatase (158 aa).

Ala2 carries the post-translational modification N-acetylalanine. Cys13 (nucleophile) is an active-site residue. The active site involves Arg19. Residue Asp130 is the Proton donor of the active site. Phosphotyrosine is present on residues Tyr132 and Tyr133.

Belongs to the low molecular weight phosphotyrosine protein phosphatase family. Interacts with EPHA2; dephosphorylates EPHA2. Interacts with EPHB1. Interacts with the SH3 domain of SPTAN1. Phosphorylated by LCK. Phosphorylation at Tyr-132 increases its phosphatase activity.

It is found in the cytoplasm. It carries out the reaction O-phospho-L-tyrosyl-[protein] + H2O = L-tyrosyl-[protein] + phosphate. The catalysed reaction is a phosphate monoester + H2O = an alcohol + phosphate. Inhibited by sulfhydryl reagents. Its function is as follows. Acts on tyrosine phosphorylated proteins, low-MW aryl phosphates and natural and synthetic acyl phosphates with differences in substrate specificity between isoform 1 and isoform 2. The sequence is that of Low molecular weight phosphotyrosine protein phosphatase (ACP1) from Sus scrofa (Pig).